The chain runs to 142 residues: Large ribosomal subunit protein uL13 (142 aa).

This sequence belongs to the universal ribosomal protein uL13 family. Part of the 50S ribosomal subunit.

This protein is one of the early assembly proteins of the 50S ribosomal subunit, although it is not seen to bind rRNA by itself. It is important during the early stages of 50S assembly. The sequence is that of Large ribosomal subunit protein uL13 from Hahella chejuensis (strain KCTC 2396).